Consider the following 1113-residue polypeptide: Carbamoyl phosphate synthase large chain (1113 aa).

Residues Met1–Glu407 are carboxyphosphate synthetic domain. Residues Arg134, Arg174, Gly180, Gly181, Glu213, Ile215, Glu220, Gly246, Val247, His248, Gln290, and Glu304 each coordinate ATP. In terms of domain architecture, ATP-grasp 1 spans Lys138–Ile333. Residues Gln290, Glu304, and Asn306 each contribute to the Mg(2+) site. Residues Gln290, Glu304, and Asn306 each contribute to the Mn(2+) site. The tract at residues Thr408 to Val565 is oligomerization domain. Residues Ala566–Phe967 are carbamoyl phosphate synthetic domain. The 192-residue stretch at Gly695–Val886 folds into the ATP-grasp 2 domain. ATP is bound by residues Arg731, Arg770, Leu772, Glu777, Gly802, Ile803, His804, Ser805, Gln845, and Glu857. Residues Gln845, Glu857, and Asn859 each coordinate Mg(2+). Gln845, Glu857, and Asn859 together coordinate Mn(2+). Residues Gly968 to Ala1113 enclose the MGS-like domain. The tract at residues Gly968 to Ala1113 is allosteric domain.

The protein belongs to the CarB family. In terms of assembly, composed of two chains; the small (or glutamine) chain promotes the hydrolysis of glutamine to ammonia, which is used by the large (or ammonia) chain to synthesize carbamoyl phosphate. Tetramer of heterodimers (alpha,beta)4. It depends on Mg(2+) as a cofactor. Requires Mn(2+) as cofactor.

It catalyses the reaction hydrogencarbonate + L-glutamine + 2 ATP + H2O = carbamoyl phosphate + L-glutamate + 2 ADP + phosphate + 2 H(+). The catalysed reaction is hydrogencarbonate + NH4(+) + 2 ATP = carbamoyl phosphate + 2 ADP + phosphate + 2 H(+). It participates in amino-acid biosynthesis; L-arginine biosynthesis; carbamoyl phosphate from bicarbonate: step 1/1. Its pathway is pyrimidine metabolism; UMP biosynthesis via de novo pathway; (S)-dihydroorotate from bicarbonate: step 1/3. In terms of biological role, large subunit of the glutamine-dependent carbamoyl phosphate synthetase (CPSase). CPSase catalyzes the formation of carbamoyl phosphate from the ammonia moiety of glutamine, carbonate, and phosphate donated by ATP, constituting the first step of 2 biosynthetic pathways, one leading to arginine and/or urea and the other to pyrimidine nucleotides. The large subunit (synthetase) binds the substrates ammonia (free or transferred from glutamine from the small subunit), hydrogencarbonate and ATP and carries out an ATP-coupled ligase reaction, activating hydrogencarbonate by forming carboxy phosphate which reacts with ammonia to form carbamoyl phosphate. The chain is Carbamoyl phosphate synthase large chain from Corynebacterium glutamicum (strain ATCC 13032 / DSM 20300 / JCM 1318 / BCRC 11384 / CCUG 27702 / LMG 3730 / NBRC 12168 / NCIMB 10025 / NRRL B-2784 / 534).